Here is a 345-residue protein sequence, read N- to C-terminus: S-adenosylmethionine:tRNA ribosyltransferase-isomerase (345 aa).

The protein belongs to the QueA family. As to quaternary structure, monomer.

The protein resides in the cytoplasm. The enzyme catalyses 7-aminomethyl-7-carbaguanosine(34) in tRNA + S-adenosyl-L-methionine = epoxyqueuosine(34) in tRNA + adenine + L-methionine + 2 H(+). The protein operates within tRNA modification; tRNA-queuosine biosynthesis. In terms of biological role, transfers and isomerizes the ribose moiety from AdoMet to the 7-aminomethyl group of 7-deazaguanine (preQ1-tRNA) to give epoxyqueuosine (oQ-tRNA). The chain is S-adenosylmethionine:tRNA ribosyltransferase-isomerase from Helicobacter acinonychis (strain Sheeba).